The sequence spans 252 residues: 5-oxoprolinase subunit A (252 aa).

This sequence belongs to the LamB/PxpA family. As to quaternary structure, forms a complex composed of PxpA, PxpB and PxpC.

The catalysed reaction is 5-oxo-L-proline + ATP + 2 H2O = L-glutamate + ADP + phosphate + H(+). In terms of biological role, catalyzes the cleavage of 5-oxoproline to form L-glutamate coupled to the hydrolysis of ATP to ADP and inorganic phosphate. The sequence is that of 5-oxoprolinase subunit A from Staphylococcus epidermidis (strain ATCC 35984 / DSM 28319 / BCRC 17069 / CCUG 31568 / BM 3577 / RP62A).